A 447-amino-acid chain; its full sequence is Methylenetetrahydrofolate--tRNA-(uracil-5-)-methyltransferase TrmFO (447 aa).

13 to 18 (GAGLAG) serves as a coordination point for FAD.

This sequence belongs to the MnmG family. TrmFO subfamily. FAD serves as cofactor.

The protein resides in the cytoplasm. The enzyme catalyses uridine(54) in tRNA + (6R)-5,10-methylene-5,6,7,8-tetrahydrofolate + NADH + H(+) = 5-methyluridine(54) in tRNA + (6S)-5,6,7,8-tetrahydrofolate + NAD(+). The catalysed reaction is uridine(54) in tRNA + (6R)-5,10-methylene-5,6,7,8-tetrahydrofolate + NADPH + H(+) = 5-methyluridine(54) in tRNA + (6S)-5,6,7,8-tetrahydrofolate + NADP(+). Catalyzes the folate-dependent formation of 5-methyl-uridine at position 54 (M-5-U54) in all tRNAs. This Streptococcus thermophilus (strain ATCC BAA-250 / LMG 18311) protein is Methylenetetrahydrofolate--tRNA-(uracil-5-)-methyltransferase TrmFO.